We begin with the raw amino-acid sequence, 133 residues long: Hexon-interlacing protein (133 aa).

Residues 97 to 127 (REEDALSVVLTRMEELSQQLQDLFAKVALLN) adopt a coiled-coil conformation.

This sequence belongs to the adenoviridae hexon-interlacing protein family. In terms of assembly, homotrimer. Interacts with hexon protein; this interaction tethers the hexons together. Self-interacts with adjacent proteins. Interacts with kinesin light chain KLC1; this interaction leads to capsid disruption at the nuclear pore complex during virus entry into host cell.

It localises to the virion. The protein resides in the host nucleus. Functionally, structural component of the virion that acts as a cement protein on the capsid exterior and forms triskelion structures consisting of three molecules that stabilize three hexon trimers at the center of each icosahedral facet and fixes the peripentonal hexons. Dispensable for assembly. During virus entry, recruits the anterograde motor kinesin-1 to the capsid docked at the nuclear pore complex thereby subjecting the docked capsid to a pulling force. The resulting tension leads to capsid disruption, dispersion of capsid fragments toward cell periphery and eventually viral DNA entry into the host nucleus. The sequence is that of Hexon-interlacing protein from Homo sapiens (Human).